The primary structure comprises 423 residues: Gamma-glutamyl phosphate reductase (423 aa).

The protein belongs to the gamma-glutamyl phosphate reductase family.

It localises to the cytoplasm. The catalysed reaction is L-glutamate 5-semialdehyde + phosphate + NADP(+) = L-glutamyl 5-phosphate + NADPH + H(+). It participates in amino-acid biosynthesis; L-proline biosynthesis; L-glutamate 5-semialdehyde from L-glutamate: step 2/2. Catalyzes the NADPH-dependent reduction of L-glutamate 5-phosphate into L-glutamate 5-semialdehyde and phosphate. The product spontaneously undergoes cyclization to form 1-pyrroline-5-carboxylate. The protein is Gamma-glutamyl phosphate reductase of Paraburkholderia xenovorans (strain LB400).